A 76-amino-acid polypeptide reads, in one-letter code: U14-hexatoxin-Hi1a (76 aa).

Positions 1–18 are cleaved as a signal peptide; it reads MMQLAVLICLSLVVNTFA. Disulfide bonds link Cys21-Cys34, Cys27-Cys39, and Cys33-Cys61.

As to expression, expressed by the venom gland.

It localises to the secreted. In terms of biological role, probable ion channel inhibitor. This Hadronyche infensa (Fraser island funnel-web spider) protein is U14-hexatoxin-Hi1a.